A 247-amino-acid polypeptide reads, in one-letter code: Adenosylcobinamide-GDP ribazoletransferase (247 aa).

5 helical membrane passes run isoleucine 34–leucine 54, cysteine 59–phenylalanine 79, glycine 113–leucine 133, methionine 138–tyrosine 158, and leucine 187–valine 207.

Belongs to the CobS family. Requires Mg(2+) as cofactor.

The protein resides in the cell inner membrane. The catalysed reaction is alpha-ribazole + adenosylcob(III)inamide-GDP = adenosylcob(III)alamin + GMP + H(+). It catalyses the reaction alpha-ribazole 5'-phosphate + adenosylcob(III)inamide-GDP = adenosylcob(III)alamin 5'-phosphate + GMP + H(+). It participates in cofactor biosynthesis; adenosylcobalamin biosynthesis; adenosylcobalamin from cob(II)yrinate a,c-diamide: step 7/7. Functionally, joins adenosylcobinamide-GDP and alpha-ribazole to generate adenosylcobalamin (Ado-cobalamin). Also synthesizes adenosylcobalamin 5'-phosphate from adenosylcobinamide-GDP and alpha-ribazole 5'-phosphate. This Salmonella choleraesuis (strain SC-B67) protein is Adenosylcobinamide-GDP ribazoletransferase.